Consider the following 66-residue polypeptide: Large ribosomal subunit protein uL29 (66 aa).

Belongs to the universal ribosomal protein uL29 family.

The polypeptide is Large ribosomal subunit protein uL29 (Brucella abortus (strain S19)).